The sequence spans 315 residues: N-acetyl-D-glutamate racemase (315 aa).

Residues aspartate 147, glutamate 173, and aspartate 196 each coordinate Mg(2+).

The protein belongs to the mandelate racemase/muconate lactonizing enzyme family. Requires Mg(2+) as cofactor.

The catalysed reaction is N-acetyl-D-glutamate = N-acetyl-L-glutamate. Its pathway is amino-acid degradation. Functionally, racemase involved in a deamination-independent D-glutamate degradation pathway, named the DgcN-DgcA pathway. Catalyzes the conversion of N-acetyl-D-glutamate to N-acetyl-L-glutamate. Also shows racemase activity towards the dipeptide L-Ala-D-Glu, a key constituent of peptidoglycan muropeptides, suggesting that it may also contribute to the degradation of peptidoglycans. This Pseudoalteromonas sp protein is N-acetyl-D-glutamate racemase.